Here is a 149-residue protein sequence, read N- to C-terminus: Large ribosomal subunit protein uL15 (149 aa).

Basic residues-rich tracts occupy residues 1 to 13 (MPTR…KHRG) and 21 to 42 (RIGK…HHHR). Positions 1–44 (MPTRLTKTRKHRGNVSAGKGRIGKHRKHPGGRGKAGGQHHHRTN) are disordered.

This sequence belongs to the universal ribosomal protein uL15 family. As to quaternary structure, component of the large ribosomal subunit. Mature ribosomes consist of a small (40S) and a large (60S) subunit. The 40S subunit contains about 32 different proteins and 1 molecule of RNA (18S). The 60S subunit contains 45 different proteins and 3 molecules of RNA (25S, 5.8S and 5S).

The protein localises to the cytoplasm. Component of the ribosome, a large ribonucleoprotein complex responsible for the synthesis of proteins in the cell. The small ribosomal subunit (SSU) binds messenger RNAs (mRNAs) and translates the encoded message by selecting cognate aminoacyl-transfer RNA (tRNA) molecules. The large subunit (LSU) contains the ribosomal catalytic site termed the peptidyl transferase center (PTC), which catalyzes the formation of peptide bonds, thereby polymerizing the amino acids delivered by tRNAs into a polypeptide chain. The nascent polypeptides leave the ribosome through a tunnel in the LSU and interact with protein factors that function in enzymatic processing, targeting, and the membrane insertion of nascent chains at the exit of the ribosomal tunnel. This Candida albicans (strain SC5314 / ATCC MYA-2876) (Yeast) protein is Large ribosomal subunit protein uL15.